The following is a 331-amino-acid chain: L-lactate dehydrogenase A chain (331 aa).

NAD(+) contacts are provided by residues 29-57 (GMVG…MEDK) and Arg98. Substrate-binding residues include Arg105, Asn137, and Arg168. Asn137 is a binding site for NAD(+). His192 acts as the Proton acceptor in catalysis. Thr247 is a binding site for substrate.

Belongs to the LDH/MDH superfamily. LDH family. In terms of assembly, homotetramer.

The protein localises to the cytoplasm. The enzyme catalyses (S)-lactate + NAD(+) = pyruvate + NADH + H(+). It functions in the pathway fermentation; pyruvate fermentation to lactate; (S)-lactate from pyruvate: step 1/1. Interconverts simultaneously and stereospecifically pyruvate and lactate with concomitant interconversion of NADH and NAD(+). In Chaenocephalus aceratus (Blackfin icefish), this protein is L-lactate dehydrogenase A chain (ldha).